Reading from the N-terminus, the 111-residue chain is Ribosome-binding factor A (111 aa).

It belongs to the RbfA family. As to quaternary structure, monomer. Binds 30S ribosomal subunits, but not 50S ribosomal subunits or 70S ribosomes.

The protein resides in the cytoplasm. One of several proteins that assist in the late maturation steps of the functional core of the 30S ribosomal subunit. Associates with free 30S ribosomal subunits (but not with 30S subunits that are part of 70S ribosomes or polysomes). Required for efficient processing of 16S rRNA. May interact with the 5'-terminal helix region of 16S rRNA. The polypeptide is Ribosome-binding factor A (Helicobacter pylori (strain P12)).